A 300-amino-acid polypeptide reads, in one-letter code: Ribosomal protein bS6--L-glutamate ligase (300 aa).

In terms of domain architecture, ATP-grasp spans Met104–Glu287. Residues Lys141, Glu178–Tyr179, Asp187, and Arg211–Asn213 contribute to the ATP site. Residues Asp248, Glu260, and Asn262 each coordinate Mg(2+). Mn(2+) contacts are provided by Asp248, Glu260, and Asn262.

This sequence belongs to the RimK family. Requires Mg(2+) as cofactor. Mn(2+) serves as cofactor.

In terms of biological role, an L-glutamate ligase that catalyzes the ATP-dependent post-translational addition of glutamate residues to the C-terminus of ribosomal protein bS6 (RpsF). Is also able to catalyze the synthesis of poly-alpha-glutamate in vitro, via ATP hydrolysis from unprotected glutamate as substrate. The number of glutamate residues added to either RpsF or to poly-alpha-glutamate changes with pH. The sequence is that of Ribosomal protein bS6--L-glutamate ligase from Escherichia coli O81 (strain ED1a).